A 557-amino-acid polypeptide reads, in one-letter code: Dihydroxy-acid dehydratase (557 aa).

Residue Cys-50 coordinates [2Fe-2S] cluster. Asp-82 provides a ligand contact to Mg(2+). Cys-123 lines the [2Fe-2S] cluster pocket. Residues Asp-124 and Lys-125 each contribute to the Mg(2+) site. Position 125 is an N6-carboxylysine (Lys-125). Cys-195 is a [2Fe-2S] cluster binding site. Glu-447 is a binding site for Mg(2+). Residue Ser-473 is the Proton acceptor of the active site.

Belongs to the IlvD/Edd family. In terms of assembly, homodimer. [2Fe-2S] cluster is required as a cofactor. The cofactor is Mg(2+).

The enzyme catalyses (2R)-2,3-dihydroxy-3-methylbutanoate = 3-methyl-2-oxobutanoate + H2O. It catalyses the reaction (2R,3R)-2,3-dihydroxy-3-methylpentanoate = (S)-3-methyl-2-oxopentanoate + H2O. It participates in amino-acid biosynthesis; L-isoleucine biosynthesis; L-isoleucine from 2-oxobutanoate: step 3/4. It functions in the pathway amino-acid biosynthesis; L-valine biosynthesis; L-valine from pyruvate: step 3/4. Functionally, functions in the biosynthesis of branched-chain amino acids. Catalyzes the dehydration of (2R,3R)-2,3-dihydroxy-3-methylpentanoate (2,3-dihydroxy-3-methylvalerate) into 2-oxo-3-methylpentanoate (2-oxo-3-methylvalerate) and of (2R)-2,3-dihydroxy-3-methylbutanoate (2,3-dihydroxyisovalerate) into 2-oxo-3-methylbutanoate (2-oxoisovalerate), the penultimate precursor to L-isoleucine and L-valine, respectively. This chain is Dihydroxy-acid dehydratase, found in Herminiimonas arsenicoxydans.